A 140-amino-acid polypeptide reads, in one-letter code: Protein ApaG (140 aa).

Residues 13–137 enclose the ApaG domain; sequence EARTRDIVVR…FSLHLPGAAM (125 aa).

This is Protein ApaG from Caulobacter vibrioides (strain ATCC 19089 / CIP 103742 / CB 15) (Caulobacter crescentus).